The following is a 515-amino-acid chain: Cytidine and dCMP deaminase domain-containing protein 1 (515 aa).

2 stretches are compositionally biased toward polar residues: residues 1–11 (MKEAGQMQNLE) and 18–27 (SVSTQTGSMT). Disordered stretches follow at residues 1 to 27 (MKEAGQMQNLESARAGRSVSTQTGSMT) and 56 to 83 (RQKSQKNEEGKHGPLGDNEEMTRVSTDK). Positions 60–83 (QKNEEGKHGPLGDNEEMTRVSTDK) are enriched in basic and acidic residues. The region spanning 71–169 (GDNEEMTRVS…SLLTEASSSE (99 aa)) is the CMP/dCMP-type deaminase 1 domain. Residues H110, C135, and C138 each contribute to the Zn(2+) site. A Nuclear export signal motif is present at residues 272–284 (NLRQNMKDLILLL). Positions 318–483 (EIARHCMVQA…LNPSGAYGLE (166 aa)) constitute a CMP/dCMP-type deaminase 2 domain. H399 provides a ligand contact to Zn(2+). E401 serves as the catalytic Proton donor. 2 residues coordinate Zn(2+): C427 and C430. Residues 489–511 (RRENGVLRPVPQKEEQHQDKKLC) carry the Bipartite nuclear localization signal motif. The tract at residues 494–515 (VLRPVPQKEEQHQDKKLCLGIH) is disordered.

It belongs to the cytidine and deoxycytidylate deaminase family. The cofactor is Zn(2+).

It is found in the cytoplasm. Its subcellular location is the nucleus. The catalysed reaction is 2'-deoxycytidine + H2O + H(+) = 2'-deoxyuridine + NH4(+). The enzyme catalyses cytidine + H2O + H(+) = uridine + NH4(+). Functionally, catalyzes the deamination of cytidine and deoxycytidine into uridine and deoxyuridine, respectively. May play an important role in testicular development and spermatogenesis. This is Cytidine and dCMP deaminase domain-containing protein 1 (CDADC1) from Pongo abelii (Sumatran orangutan).